Here is a 109-residue protein sequence, read N- to C-terminus: MSQIAQEMTVSLRNARTQLDMVNQQLAYLDRQEKLAELTKKELESYPTDKVWRSCGKSFILQDKSKYVNDLSHDETVLLDQRKTLKIKKNYLETTVEKTIDNLKALMKN.

Serine 2 carries the post-translational modification N-acetylserine.

The protein belongs to the prefoldin subunit beta family. Heterohexamer of two PFD-alpha type and four PFD-beta type subunits.

The protein resides in the cytoplasm. Functionally, binds specifically to cytosolic chaperonin (c-CPN) and transfers target proteins to it. Binds to nascent polypeptide chain and promotes folding in an environment in which there are many competing pathways for nonnative proteins. The chain is Prefoldin subunit 1 (PFD1) from Saccharomyces cerevisiae (strain ATCC 204508 / S288c) (Baker's yeast).